Consider the following 395-residue polypeptide: Argininosuccinate synthase (395 aa).

Residues 9 to 17 and alanine 37 contribute to the ATP site; that span reads AYSGGLDTS. 2 residues coordinate L-citrulline: tyrosine 87 and serine 92. Glycine 117 is an ATP binding site. L-aspartate is bound by residues threonine 119, asparagine 123, and aspartate 124. Asparagine 123 serves as a coordination point for L-citrulline. Arginine 127, serine 173, serine 182, glutamate 258, and tyrosine 270 together coordinate L-citrulline.

The protein belongs to the argininosuccinate synthase family. Type 1 subfamily. As to quaternary structure, homotetramer.

It is found in the cytoplasm. The enzyme catalyses L-citrulline + L-aspartate + ATP = 2-(N(omega)-L-arginino)succinate + AMP + diphosphate + H(+). Its pathway is amino-acid biosynthesis; L-arginine biosynthesis; L-arginine from L-ornithine and carbamoyl phosphate: step 2/3. The protein is Argininosuccinate synthase of Methanospirillum hungatei JF-1 (strain ATCC 27890 / DSM 864 / NBRC 100397 / JF-1).